A 167-amino-acid polypeptide reads, in one-letter code: NADH-quinone oxidoreductase subunit B (167 aa).

4 residues coordinate [4Fe-4S] cluster: Cys-40, Cys-41, Cys-105, and Cys-134.

Belongs to the complex I 20 kDa subunit family. NDH-1 is composed of 14 different subunits. Subunits NuoB, C, D, E, F, and G constitute the peripheral sector of the complex. It depends on [4Fe-4S] cluster as a cofactor.

It localises to the cell inner membrane. The catalysed reaction is a quinone + NADH + 5 H(+)(in) = a quinol + NAD(+) + 4 H(+)(out). In terms of biological role, NDH-1 shuttles electrons from NADH, via FMN and iron-sulfur (Fe-S) centers, to quinones in the respiratory chain. The immediate electron acceptor for the enzyme in this species is believed to be ubiquinone. Couples the redox reaction to proton translocation (for every two electrons transferred, four hydrogen ions are translocated across the cytoplasmic membrane), and thus conserves the redox energy in a proton gradient. This is NADH-quinone oxidoreductase subunit B from Campylobacter jejuni subsp. jejuni serotype O:6 (strain 81116 / NCTC 11828).